We begin with the raw amino-acid sequence, 146 residues long: Kappa-casein (146 aa).

Thr97, Thr107, Thr112, and Thr118 each carry an O-linked (GalNAc...) threonine glycan. Thr121 bears the Phosphothreonine mark. The residue at position 125 (Ser125) is a Phosphoserine; alternate. Residue Ser125 is glycosylated (O-linked (GalNAc...) serine; alternate). O-linked (GalNAc...) threonine glycosylation occurs at Thr142. The residue at position 143 (Ser143) is a Phosphoserine.

It belongs to the kappa-casein family. As to expression, mammary gland specific. Secreted in milk.

It localises to the secreted. Functionally, kappa-casein stabilizes micelle formation, preventing casein precipitation in milk. In Panthera uncia (Snow leopard), this protein is Kappa-casein (CSN3).